The sequence spans 136 residues: Urease subunit beta (136 aa).

Residues 112–136 (ENDEYAGVFGDNGTENVNKKGGKRS) form a disordered region.

Belongs to the urease beta subunit family. As to quaternary structure, heterotrimer of UreA (gamma), UreB (beta) and UreC (alpha) subunits. Three heterotrimers associate to form the active enzyme.

The protein resides in the cytoplasm. It catalyses the reaction urea + 2 H2O + H(+) = hydrogencarbonate + 2 NH4(+). Its pathway is nitrogen metabolism; urea degradation; CO(2) and NH(3) from urea (urease route): step 1/1. The sequence is that of Urease subunit beta from Staphylococcus aureus (strain MRSA252).